A 674-amino-acid polypeptide reads, in one-letter code: Dystrophia myotonica WD repeat-containing protein (674 aa).

At Ala2 the chain carries N-acetylalanine. Disordered regions lie at residues 31–92 and 103–122; these read GFYK…PALP and EPDS…LGSG. Positions 53–65 are enriched in pro residues; it reads PVPPQPPQPPPGP. Residues 66-77 are compositionally biased toward low complexity; that stretch reads ASASGPGAAGPA. A compositionally biased stretch (pro residues) spans 78–90; it reads SSPPPAGPGPGPA. Low complexity predominate over residues 107–118; that stretch reads AGAGEPPATPAG. WD repeat units follow at residues 211 to 251, 282 to 321, 324 to 363, 366 to 409, and 413 to 453; these read IDKT…ASAP, VGEG…LRGL, SYFG…VVAR, GHKS…EAAG, and AGGA…LYPH. 4 disordered regions span residues 384–419, 456–516, 532–573, and 637–674; these read EEAA…APLS, LART…EPGT, RDRG…RSRL, and DEET…GTVV. Composition is skewed to low complexity over residues 457–478 and 487–499; these read ARTR…SSRG and PRSL…LPHP. Ser495 carries the phosphoserine modification. Composition is skewed to gly residues over residues 500-509 and 550-563; these read AGGGKAGGPG and SRGG…GGEK. Omega-N-methylarginine is present on Arg551. A WD 6 repeat occupies 601–638; that stretch reads IAQERLTVLLFLEDCIITACQEGLICTWARPGKAFTDE. A compositionally biased stretch (polar residues) spans 642 to 674; the sequence is AQTGEGSWPRSPSKSVVEGISSQPGNSPSGTVV.

Component of the USP12/DMWD/WDR48 deubiquitinating complex. Interacts with USP12; promotes its enzymatic activity. Interacts with USP46.

It localises to the cytoplasm. The protein resides in the nucleus. Its subcellular location is the perikaryon. It is found in the cell projection. The protein localises to the dendrite. Regulator of the deubiquitinating USP12/DMWD/WDR48 complex. Functions as a cofactor that promotes USP12 enzymatic activity. The sequence is that of Dystrophia myotonica WD repeat-containing protein from Homo sapiens (Human).